A 64-amino-acid chain; its full sequence is DNA gyrase inhibitor YacG (64 aa).

C9, C12, C28, and C32 together coordinate Zn(2+). Positions 42-64 (DEENAIPGAPDMSDSDGWSEEQY) are disordered. Acidic residues predominate over residues 54–64 (SDSDGWSEEQY).

This sequence belongs to the DNA gyrase inhibitor YacG family. Interacts with GyrB. It depends on Zn(2+) as a cofactor.

Inhibits all the catalytic activities of DNA gyrase by preventing its interaction with DNA. Acts by binding directly to the C-terminal domain of GyrB, which probably disrupts DNA binding by the gyrase. The polypeptide is DNA gyrase inhibitor YacG (Vibrio vulnificus (strain CMCP6)).